The following is a 470-amino-acid chain: Calmodulin-binding receptor-like cytoplasmic kinase 1 (470 aa).

Disordered stretches follow at residues 1 to 29 (MPMR…SWTD) and 65 to 128 (PTEC…SKSW). The segment covering 65-82 (PTECRSDPGESSTHDRES) has biased composition (basic and acidic residues). 2 stretches are compositionally biased toward polar residues: residues 83–98 (TLSG…SFGR) and 108–121 (YRFS…PGKD). The Protein kinase domain occupies 147–423 (FSSVHQIGEG…MKGIAEKLWA (277 aa)). Residues 153-161 (IGEGGFGTV) and Lys-175 each bind ATP. Positions 162-185 (FKGKLDDGTIVAIKRARKNNYGKS) are caM-binding. Asp-273 functions as the Proton acceptor in the catalytic mechanism. 2 positions are modified to phosphoserine: Ser-277 and Ser-308. Thr-309 bears the Phosphothreonine mark. Residue Tyr-322 is modified to Phosphotyrosine.

Belongs to the protein kinase superfamily. Ser/Thr protein kinase family. As to quaternary structure, interacts with calmodulin (CaM) in a Ca(2+)-dependent manner. Mg(2+) serves as cofactor. Autophosphorylated.

It is found in the cytoplasm. It catalyses the reaction L-seryl-[protein] + ATP = O-phospho-L-seryl-[protein] + ADP + H(+). The catalysed reaction is L-threonyl-[protein] + ATP = O-phospho-L-threonyl-[protein] + ADP + H(+). Its activity is regulated as follows. Up-regulated by Ca(2+)/CaM. The chain is Calmodulin-binding receptor-like cytoplasmic kinase 1 (CRCK1) from Arabidopsis thaliana (Mouse-ear cress).